The chain runs to 407 residues: Aspartate aminotransferase, cytoplasmic (407 aa).

L-aspartate is bound by residues G39, W136, and N189. K253 is modified (N6-(pyridoxal phosphate)lysine). R381 contacts L-aspartate.

The protein belongs to the class-I pyridoxal-phosphate-dependent aminotransferase family. In terms of assembly, homodimer. Requires pyridoxal 5'-phosphate as cofactor.

It localises to the cytoplasm. The enzyme catalyses L-aspartate + 2-oxoglutarate = oxaloacetate + L-glutamate. Functionally, important for the metabolism of amino acids and Krebs-cycle related organic acids. In plants, it is involved in nitrogen metabolism and in aspects of carbon and energy metabolism. The protein is Aspartate aminotransferase, cytoplasmic of Oryza sativa subsp. japonica (Rice).